The sequence spans 334 residues: Oligopeptide transport ATP-binding protein OppF (334 aa).

Residues 12–265 (LEIADLKVHF…PLHPYTKALM (254 aa)) form the ABC transporter domain. ATP is bound at residue 57 to 64 (GESGCGKS).

It belongs to the ABC transporter superfamily. As to quaternary structure, the complex is composed of two ATP-binding proteins (OppD and OppF), two transmembrane proteins (OppB and OppC) and a solute-binding protein (OppA).

It is found in the cell inner membrane. The catalysed reaction is a [peptide](out) + ATP + H2O = a [peptide](in) + ADP + phosphate + H(+). It carries out the reaction L-alanyl-gamma-D-glutamyl-meso-2,6-diaminopimelate(out) + ATP + H2O = L-alanyl-gamma-D-glutamyl-meso-2,6-diaminopimelate(in) + ADP + phosphate + H(+). In terms of biological role, part of the ABC transporter complex OppABCDF involved in the uptake of oligopeptides, including the cell wall murein tripeptide L-alanyl-gamma-D-glutamyl-meso-diaminopimelate. Probably responsible for energy coupling to the transport system. Plays an important nutritional role and is involved in the recycling of cell wall peptides. This chain is Oligopeptide transport ATP-binding protein OppF, found in Salmonella typhimurium (strain LT2 / SGSC1412 / ATCC 700720).